Reading from the N-terminus, the 511-residue chain is uncharacterized protein (511 aa).

Residues 59-79 (VPVAANDDQPDGSRQSVRGRQ) form a disordered region.

The protein belongs to the transposase 25 family.

This is an uncharacterized protein from Sinorhizobium fredii (strain NBRC 101917 / NGR234).